The following is a 46-amino-acid chain: Diuretic hormone class 1 (46 aa).

Residue Ile46 is modified to Isoleucine amide.

It is found in the secreted. Its function is as follows. Regulation of fluid secretion. Stimulates primary urine secretion by Malpighian tubules and causes a dose-dependent stimulation of cAMP levels in the tubules. Has a greater effect on the transport of Na(+) then K(+) ions. In vitro, has synergistic effects with the smaller diuretic hormone DH(31) which co-occurs with it. In Diploptera punctata (Pacific beetle cockroach), this protein is Diuretic hormone class 1.